The sequence spans 39 residues: Omega-theraphotoxin-Asp1g (39 aa).

3 disulfide bridges follow: Cys-4-Cys-25, Cys-8-Cys-31, and Cys-17-Cys-36.

It belongs to the neurotoxin 12 (Hwtx-2) family. 06 (TXP1) subfamily. As to expression, expressed by the venom gland.

It is found in the secreted. In terms of biological role, inhibits voltage-gated calcium channels (Cav) in rat cerebellar granule cells. Has insecticidal activity. In Aphonopelma sp. (American tarantula), this protein is Omega-theraphotoxin-Asp1g.